The chain runs to 509 residues: Proton-gated ion channel subunit pbo-5 (509 aa).

The first 21 residues, 1–21 (MTRLSILQHLLTFLILSKINA), serve as a signal peptide directing secretion. Residues 22–275 (TSTTESYFDS…ISLKRRPLFY (254 aa)) are Extracellular-facing. Cys-193 and Cys-207 are oxidised to a cystine. The next 3 membrane-spanning stretches (helical) occupy residues 276–296 (MVTL…GLFA), 310–330 (LGVT…EKVP), and 336–356 (VPLL…AAMT). Topologically, residues 357–487 (TGIVMKVHRL…GYVRISERLD (131 aa)) are cytoplasmic. Residues 488–508 (ILFMFLFLSTVTIPVAVLFYL) form a helical membrane-spanning segment.

Belongs to the ligand-gated ion channel (TC 1.A.9) family. Acetylcholine receptor (TC 1.A.9.1) subfamily. As to quaternary structure, the functional channel is a heterooligomer of pbo-5 and pbo-6. May self-associate to form homooligomers with negligible ion channel activity. Expressed in the posterior body muscles. Also detected in the RIFL, RIFR and RIS head neurons.

The protein localises to the membrane. Forms a proton-gated ion channel with pbo-6 that is activated by acidification of the posterior coelomic space, leading to posterior body wall muscle contraction (pBoc) during the defecation cycle. Probably by regulating the defecation motor program, required for fatty acid uptake by intestinal cells. Does not bind neurotransmitters such as acetylcholine, gamma-aminobutyric acid, glycine, serotonin, glutamate or choline. This Caenorhabditis elegans protein is Proton-gated ion channel subunit pbo-5.